Here is a 589-residue protein sequence, read N- to C-terminus: Mini-chromosome maintenance complex-binding protein (589 aa).

The disordered stretch occupies residues Val163–Ala211. Residues Ala193–Gly207 are compositionally biased toward polar residues.

Belongs to the MCMBP family. Interacts with the MCM complex.

It is found in the nucleus. In terms of biological role, associated component of the MCM complex that acts as a regulator of DNA replication. Binds to the MCM complex during late S phase and may act by promoting the disassembly of the MCM complex from chromatin. Required for sister chromatid cohesion. In Arabidopsis thaliana (Mouse-ear cress), this protein is Mini-chromosome maintenance complex-binding protein (ETG1).